Reading from the N-terminus, the 514-residue chain is uncharacterized protein (514 aa).

This is an uncharacterized protein from Caenorhabditis elegans.